The primary structure comprises 243 residues: MSGHSKWSTIKRKKGALDAKRNKIFTKLIREITIAAKIGGGDIESNPRLRVAVNKAKVANMPKDNIEKAIKKGIGGNEGVEYFEITYEAYAPYGVALMIKCLTDNKNRTSSDVKSVLAKGGGSLGTPGSVSYMFYRKGLIVYNLEKYLEDEIMEFALEVGAEDILVSNNEAEVITSPDDFDKVLSFLKTKFKEEVAEIALIPENKISLNKDQAEKIILLVEKLEDFDDVQEVIHNLEIPEELS.

Belongs to the TACO1 family.

Its subcellular location is the cytoplasm. The protein is Probable transcriptional regulatory protein BB_0025 of Borreliella burgdorferi (strain ATCC 35210 / DSM 4680 / CIP 102532 / B31) (Borrelia burgdorferi).